Here is a 102-residue protein sequence, read N- to C-terminus: Small ribosomal subunit protein uS10 (102 aa).

It belongs to the universal ribosomal protein uS10 family. As to quaternary structure, part of the 30S ribosomal subunit.

In terms of biological role, involved in the binding of tRNA to the ribosomes. The sequence is that of Small ribosomal subunit protein uS10 from Latilactobacillus sakei subsp. sakei (strain 23K) (Lactobacillus sakei subsp. sakei).